Consider the following 76-residue polypeptide: Esculentin-2MT3 (76 aa).

An N-terminal signal peptide occupies residues 1–22 (MFTLKKSMLLLFFLGTISLSLC). Residues 23–37 (EEERNADEDDGEKEV) constitute a propeptide, removed in mature form. The cysteines at positions 70 and 76 are disulfide-linked.

This sequence belongs to the frog skin active peptide (FSAP) family. Esculentin subfamily. In terms of tissue distribution, expressed by the skin glands.

The protein resides in the secreted. Its function is as follows. Antimicrobial peptide. The protein is Esculentin-2MT3 of Amolops mantzorum (Sichuan torrent frog).